A 60-amino-acid polypeptide reads, in one-letter code: Large ribosomal subunit protein uL30 (60 aa).

This sequence belongs to the universal ribosomal protein uL30 family. As to quaternary structure, part of the 50S ribosomal subunit.

This is Large ribosomal subunit protein uL30 from Pediococcus pentosaceus (strain ATCC 25745 / CCUG 21536 / LMG 10740 / 183-1w).